The chain runs to 205 residues: Ribonuclease HII (205 aa).

The region spanning 14–201 (EIVAGVDEAG…KGNINHSAIL (188 aa)) is the RNase H type-2 domain. Residues Asp-20, Glu-21, and Asp-111 each contribute to the a divalent metal cation site.

This sequence belongs to the RNase HII family. Mn(2+) is required as a cofactor. Mg(2+) serves as cofactor.

Its subcellular location is the cytoplasm. It catalyses the reaction Endonucleolytic cleavage to 5'-phosphomonoester.. In terms of biological role, endonuclease that specifically degrades the RNA of RNA-DNA hybrids. The protein is Ribonuclease HII of Orientia tsutsugamushi (strain Boryong) (Rickettsia tsutsugamushi).